The following is a 359-amino-acid chain: Dual-specificity RNA methyltransferase RlmN (359 aa).

Glutamate 90 (proton acceptor) is an active-site residue. Positions 109–342 (HQERYTVCIS…CTIRESKGLD (234 aa)) constitute a Radical SAM core domain. Cysteine 116 and cysteine 347 form a disulfide bridge. Residues cysteine 123, cysteine 127, and cysteine 130 each coordinate [4Fe-4S] cluster. Residues 173-174 (GE), serine 205, 228-230 (SLH), and asparagine 304 contribute to the S-adenosyl-L-methionine site. Catalysis depends on cysteine 347, which acts as the S-methylcysteine intermediate.

Belongs to the radical SAM superfamily. RlmN family. [4Fe-4S] cluster is required as a cofactor.

It is found in the cytoplasm. The enzyme catalyses adenosine(2503) in 23S rRNA + 2 reduced [2Fe-2S]-[ferredoxin] + 2 S-adenosyl-L-methionine = 2-methyladenosine(2503) in 23S rRNA + 5'-deoxyadenosine + L-methionine + 2 oxidized [2Fe-2S]-[ferredoxin] + S-adenosyl-L-homocysteine. The catalysed reaction is adenosine(37) in tRNA + 2 reduced [2Fe-2S]-[ferredoxin] + 2 S-adenosyl-L-methionine = 2-methyladenosine(37) in tRNA + 5'-deoxyadenosine + L-methionine + 2 oxidized [2Fe-2S]-[ferredoxin] + S-adenosyl-L-homocysteine. Specifically methylates position 2 of adenine 2503 in 23S rRNA and position 2 of adenine 37 in tRNAs. m2A2503 modification seems to play a crucial role in the proofreading step occurring at the peptidyl transferase center and thus would serve to optimize ribosomal fidelity. This Sulfurovum sp. (strain NBC37-1) protein is Dual-specificity RNA methyltransferase RlmN.